The primary structure comprises 70 residues: Conotoxin elongated-tx3a-a (70 aa).

Positions 1–24 (MLKMGVVLFIFLVLFPLATLQLDA) are cleaved as a signal peptide. A propeptide spanning residues 25 to 44 (DQPVERYAENKQLLSPDERR) is cleaved from the precursor. 3 cysteine pairs are disulfide-bonded: Cys55-Cys68, Cys56-Cys66, and Cys61-Cys69. A 6'-bromotryptophan; partial modification is found at Trp58. A Cysteine amide; partial modification is found at Cys69.

This sequence belongs to the conotoxin M superfamily. In terms of processing, two short peptides are produced from this precursor; Conotoxin tx3a-b is amidated at Cys-69 (but has no bromotryptophan), whereas conotoxin tx3a-a has an unmodified Gly-70 and a bromotryptophan. Two elongated peptides are also produced; Conotoxin elongated-tx3a-b is amidated at Cys-69 (but has no bromotryptophan), whereas conotoxin elongated tx3a-a has an unmodified Gly-70 (but has no bromotryptophan). Post-translationally, ju et al. (2022) describe a disulfide connectivity (C55-C61; C56-C69; C66-C68) that differs from that of Han and colleagues (2006), McDougal et al. (2008), and Ueberheide et al. (2009). In terms of tissue distribution, expressed by the venom duct. Is present in all duct parts with a highest content in part 2 (proximal of the venom bulb) and then decreases in concentration toward the end of the duct.

The protein localises to the secreted. Intracranial injection into mice causes scratching and hyperactivity. In vitro, inhibits proliferation of the mice ovarian cancer cells ID8. The polypeptide is Conotoxin elongated-tx3a-a (Conus textile (Cloth-of-gold cone)).